Reading from the N-terminus, the 392-residue chain is Chaperone protein DnaJ (392 aa).

The region spanning 5-75 is the J domain; sequence DYYEVLGIDK…QKKQQYDQFG (71 aa). The CR-type zinc-finger motif lies at 148-229; the sequence is GVEKTIKYKR…CHGTGTAKET (82 aa). The Zn(2+) site is built by Cys161, Cys164, Cys177, Cys180, Cys203, Cys206, Cys217, and Cys220. CXXCXGXG motif repeat units lie at residues 161–168, 177–184, 203–210, and 217–224; these read CENCHGTG, CPTCNGQG, CPDCHGTG, and CKHCHGTG.

Belongs to the DnaJ family. As to quaternary structure, homodimer. Zn(2+) serves as cofactor.

It is found in the cytoplasm. Its function is as follows. Participates actively in the response to hyperosmotic and heat shock by preventing the aggregation of stress-denatured proteins and by disaggregating proteins, also in an autonomous, DnaK-independent fashion. Unfolded proteins bind initially to DnaJ; upon interaction with the DnaJ-bound protein, DnaK hydrolyzes its bound ATP, resulting in the formation of a stable complex. GrpE releases ADP from DnaK; ATP binding to DnaK triggers the release of the substrate protein, thus completing the reaction cycle. Several rounds of ATP-dependent interactions between DnaJ, DnaK and GrpE are required for fully efficient folding. Also involved, together with DnaK and GrpE, in the DNA replication of plasmids through activation of initiation proteins. In Fusobacterium nucleatum subsp. nucleatum (strain ATCC 25586 / DSM 15643 / BCRC 10681 / CIP 101130 / JCM 8532 / KCTC 2640 / LMG 13131 / VPI 4355), this protein is Chaperone protein DnaJ.